The sequence spans 341 residues: Cell wall mannoprotein PIR1 (341 aa).

The first 18 residues, 1–18 (MQYKKSLVASALVATSLA), serve as a signal peptide directing secretion. A propeptide spanning residues 19-63 (AYAPKDPWSTLTPSATYKGGITDYSSTFGIAVEPIATTASSKAKR) is cleaved from the precursor. PIR1/2/3 repeat units follow at residues 64–82 (AAAI…TKTT), 83–101 (AAAV…TKTK), 102–125 (AAAV…AKTT), 126–144 (AAAV…TKTK), 145–163 (AAAV…TKTT), 164–182 (AAAV…TKTT), 183–201 (AAAV…TNTT), and 202–220 (VAPV…TLTS).

The protein belongs to the PIR protein family. In terms of processing, covalently linked to beta-1,3-glucan of the inner cell wall layer via an alkali-sensitive ester linkage between the gamma-carboxyl group of glutamic acids, arising from specific glutamines within the PIR1/2/3 repeats, and hydroxyl groups of glucoses of beta-1,3-glucan chains. Post-translationally, O-glycosylated. Extensively O-mannosylated.

Its subcellular location is the secreted. It localises to the cell wall. Component of the outer cell wall layer. Required for stability of the cell wall and for optimal growth. Required for resistance against several antifungal and cell wall-perturbing agents and for tolerance to heat shock. The polypeptide is Cell wall mannoprotein PIR1 (PIR1) (Saccharomyces cerevisiae (strain ATCC 204508 / S288c) (Baker's yeast)).